A 612-amino-acid chain; its full sequence is Isocitrate dehydrogenase kinase/phosphatase (612 aa).

Residues 327 to 333 and Lys-348 each bind ATP; that span reads APGIKGL. The active site involves Asp-383. The disordered stretch occupies residues 593-612; sequence AGAASNEQDAPDAGRSVRAA.

It belongs to the AceK family.

It localises to the cytoplasm. The catalysed reaction is L-seryl-[isocitrate dehydrogenase] + ATP = O-phospho-L-seryl-[isocitrate dehydrogenase] + ADP + H(+). Functionally, bifunctional enzyme which can phosphorylate or dephosphorylate isocitrate dehydrogenase (IDH) on a specific serine residue. This is a regulatory mechanism which enables bacteria to bypass the Krebs cycle via the glyoxylate shunt in response to the source of carbon. When bacteria are grown on glucose, IDH is fully active and unphosphorylated, but when grown on acetate or ethanol, the activity of IDH declines drastically concomitant with its phosphorylation. This chain is Isocitrate dehydrogenase kinase/phosphatase, found in Paraburkholderia xenovorans (strain LB400).